A 504-amino-acid chain; its full sequence is Cytochrome P450 4A2 (504 aa).

The propeptide occupies 1 to 4 (MGFS). Residue E315 participates in heme binding. Position 434 is a phosphoserine (S434). Position 451 (C451) interacts with heme.

This sequence belongs to the cytochrome P450 family. It depends on heme as a cofactor.

The protein localises to the endoplasmic reticulum membrane. It localises to the microsome membrane. The catalysed reaction is an omega-methyl-long-chain fatty acid + reduced [NADPH--hemoprotein reductase] + O2 = an omega-hydroxy-long-chain fatty acid + oxidized [NADPH--hemoprotein reductase] + H2O + H(+). The enzyme catalyses dodecanoate + reduced [NADPH--hemoprotein reductase] + O2 = (11R)-hydroxydodecanoate + oxidized [NADPH--hemoprotein reductase] + H2O + H(+). It carries out the reaction dodecanoate + reduced [NADPH--hemoprotein reductase] + O2 = 12-hydroxydodecanoate + oxidized [NADPH--hemoprotein reductase] + H2O + H(+). It catalyses the reaction tetradecanoate + reduced [NADPH--hemoprotein reductase] + O2 = 14-hydroxytetradecanoate + oxidized [NADPH--hemoprotein reductase] + H2O + H(+). The catalysed reaction is hexadecanoate + reduced [NADPH--hemoprotein reductase] + O2 = 16-hydroxyhexadecanoate + oxidized [NADPH--hemoprotein reductase] + H2O + H(+). It participates in lipid metabolism; fatty acid metabolism. Functionally, a cytochrome P450 monooxygenase that catalyzes omega and omega-1 hydroxylation of saturated fatty acids. Exhibits preferential omega versus omega-1 regioselectivity and (R) versus (S) stereoselectivity for hydroxylation of lauric and myristic acids. Has low activity toward palmitic acid. Mechanistically, uses molecular oxygen inserting one oxygen atom into a substrate, and reducing the second into a water molecule, with two electrons provided by NADPH via cytochrome P450 reductase (CPR; NADPH-ferrihemoprotein reductase). The sequence is that of Cytochrome P450 4A2 from Rattus norvegicus (Rat).